The following is a 98-amino-acid chain: N(2)-fixation sustaining protein CowN (98 aa).

It belongs to the CowN family.

Is required to sustain N(2)-dependent growth in the presence of low levels of carbon monoxide (CO). Probably acts by protecting the N(2) fixation ability of the nitrogenase complex, which is inactivated in the presence of CO. In Paramagnetospirillum magneticum (strain ATCC 700264 / AMB-1) (Magnetospirillum magneticum), this protein is N(2)-fixation sustaining protein CowN.